Here is a 135-residue protein sequence, read N- to C-terminus: Large ribosomal subunit protein uL16c (135 aa).

Belongs to the universal ribosomal protein uL16 family. As to quaternary structure, part of the 50S ribosomal subunit.

The protein resides in the plastid. Its subcellular location is the chloroplast. The sequence is that of Large ribosomal subunit protein uL16c from Euglena gracilis.